The chain runs to 415 residues: BTB/POZ and MATH domain-containing protein 6 (415 aa).

Positions 1–33 (MSKLMTRTSGSSSPNTIPDQIESPTSSRSVTQT) are disordered. Residues 35–169 (NGSHQFVIQG…DDCLKINCTV (135 aa)) form the MATH domain. The BTB domain occupies 205-271 (SDVTFDVAGE…MYKDSLPGDV (67 aa)). The tract at residues 385 to 415 (SSSGGGKSQSVWAQLSNGGETSSRRVRQRTT) is disordered. Positions 392 to 405 (SQSVWAQLSNGGET) are enriched in polar residues.

This sequence belongs to the Tdpoz family. In terms of assembly, heterodimer with BPM1. Interacts with RAP2-4. Interacts with CUL3A. Binds to MYB56 at the promoter of FLOWERING LOCUS T (FT). Ubiquitous.

It is found in the nucleus. The protein resides in the cytoplasm. The protein operates within protein modification; protein ubiquitination. Its function is as follows. May act as a substrate-specific adapter of an E3 ubiquitin-protein ligase complex (CUL3-RBX1-BTB) which mediates the ubiquitination and subsequent proteasomal degradation of target proteins. The sequence is that of BTB/POZ and MATH domain-containing protein 6 (BPM6) from Arabidopsis thaliana (Mouse-ear cress).